A 361-amino-acid chain; its full sequence is 5-formaminoimidazole-4-carboxamide-1-(beta)-D-ribofuranosyl 5'-monophosphate synthetase (361 aa).

Residues H27 and S94 each coordinate 5-amino-1-(5-phospho-beta-D-ribosyl)imidazole-4-carboxamide. In terms of domain architecture, ATP-grasp spans 116 to 348; it reads RAILRWEAER…MGQRIAKEIK (233 aa). ATP-binding positions include 146-208 and E230; that span reads PDDI…ANYC. N258 contacts 5-amino-1-(5-phospho-beta-D-ribosyl)imidazole-4-carboxamide. Positions 297 and 310 each coordinate Mg(2+).

The protein belongs to the phosphohexose mutase family. It depends on Mg(2+) as a cofactor. Mn(2+) serves as cofactor.

The enzyme catalyses 5-amino-1-(5-phospho-beta-D-ribosyl)imidazole-4-carboxamide + formate + ATP = 5-formamido-1-(5-phospho-D-ribosyl)imidazole-4-carboxamide + ADP + phosphate. It functions in the pathway purine metabolism; IMP biosynthesis via de novo pathway; 5-formamido-1-(5-phospho-D-ribosyl)imidazole-4-carboxamide from 5-amino-1-(5-phospho-D-ribosyl)imidazole-4-carboxamide (formate route): step 1/1. Its function is as follows. Catalyzes the ATP- and formate-dependent formylation of 5-aminoimidazole-4-carboxamide-1-beta-d-ribofuranosyl 5'-monophosphate (AICAR) to 5-formaminoimidazole-4-carboxamide-1-beta-d-ribofuranosyl 5'-monophosphate (FAICAR) in the absence of folates. The polypeptide is 5-formaminoimidazole-4-carboxamide-1-(beta)-D-ribofuranosyl 5'-monophosphate synthetase (Methanococcus maripaludis (strain C6 / ATCC BAA-1332)).